The chain runs to 320 residues: 3-hydroxybenzoate 6-hydroxylase 2 (320 aa).

The segment at 1-25 is disordered; it reads MRSTNTRSARSRPTKRSVNASATPT. Residues 16 to 25 are compositionally biased toward polar residues; sequence RSVNASATPT.

It belongs to the 3-hydroxybenzoate 6-hydroxylase family. The cofactor is FAD.

It catalyses the reaction 3-hydroxybenzoate + NADH + O2 + H(+) = 2,5-dihydroxybenzoate + NAD(+) + H2O. Its function is as follows. Catalyzes the conversion of 3-hydroxybenzoate to gentisate. The polypeptide is 3-hydroxybenzoate 6-hydroxylase 2 (hbzD) (Aquipseudomonas alcaligenes (Pseudomonas alcaligenes)).